The chain runs to 445 residues: Protein PRRC1 (445 aa).

2 disordered regions span residues 1 to 71 (MMEE…PSAP) and 105 to 167 (PPVS…TGLL). Positions 27 to 49 (MSSTPVPLAATSSFSSPNVSSME) are enriched in polar residues. Residues 59-71 (PQPPLPPVRPSAP) show a composition bias toward pro residues. A phosphoserine mark is found at Ser209 and Ser408.

This sequence belongs to the PRRC1 family. In terms of assembly, interacts with PRKAR1A; resulting in PKA activation. As to expression, ubiquitously expressed with higher expression in kidney, liver and placenta. Detected in embryonic kidney cells (HEK293 cells) (at protein level). In terms of tissue distribution, specifically expressed in liver.

Its subcellular location is the golgi apparatus. It localises to the cytoplasm. Functionally, may act as a regulator of the protein kinase A (PKA) activity during embryonic development. The chain is Protein PRRC1 (PRRC1) from Homo sapiens (Human).